The following is a 139-amino-acid chain: Protein Turandot B (139 aa).

The first 21 residues, 1–21 (MNFKTALICFALLLIGTLCSA), serve as a signal peptide directing secretion.

It belongs to the Turandot family.

It is found in the secreted. A humoral factor that may play a role in stress tolerance. This Drosophila sechellia (Fruit fly) protein is Protein Turandot B.